We begin with the raw amino-acid sequence, 290 residues long: Ribosomal RNA small subunit methyltransferase A (290 aa).

6 residues coordinate S-adenosyl-L-methionine: N27, L29, G54, E75, D100, and N125.

Belongs to the class I-like SAM-binding methyltransferase superfamily. rRNA adenine N(6)-methyltransferase family. RsmA subfamily.

It localises to the cytoplasm. It carries out the reaction adenosine(1518)/adenosine(1519) in 16S rRNA + 4 S-adenosyl-L-methionine = N(6)-dimethyladenosine(1518)/N(6)-dimethyladenosine(1519) in 16S rRNA + 4 S-adenosyl-L-homocysteine + 4 H(+). Specifically dimethylates two adjacent adenosines (A1518 and A1519) in the loop of a conserved hairpin near the 3'-end of 16S rRNA in the 30S particle. May play a critical role in biogenesis of 30S subunits. This chain is Ribosomal RNA small subunit methyltransferase A, found in Streptococcus gordonii (strain Challis / ATCC 35105 / BCRC 15272 / CH1 / DL1 / V288).